The following is a 202-amino-acid chain: CASP-like protein 2U7 (202 aa).

Residues Met-1–Ala-10 lie on the Cytoplasmic side of the membrane. A helical membrane pass occupies residues Leu-11–Leu-31. Residues Asn-32–Lys-64 lie on the Extracellular side of the membrane. Residues Phe-65 to Met-85 traverse the membrane as a helical segment. Residues Ala-86–Met-101 are Cytoplasmic-facing. A helical membrane pass occupies residues Ala-102–Val-122. Over Ser-123 to Cys-148 the chain is Extracellular. Residues Leu-149 to Ala-169 form a helical membrane-spanning segment. At Ser-170–Pro-202 the chain is on the cytoplasmic side.

Belongs to the Casparian strip membrane proteins (CASP) family. Homodimer and heterodimers.

The protein localises to the cell membrane. The protein is CASP-like protein 2U7 of Selaginella moellendorffii (Spikemoss).